The sequence spans 424 residues: Endoglucanase 1 (424 aa).

Residues 1-18 (MAKFSALCSLALLGLATA) form the signal peptide. 9 disulfide bridges follow: Cys35/Cys41, Cys68/Cys90, Cys80/Cys86, Cys156/Cys384, Cys188/Cys211, Cys192/Cys210, Cys231/Cys250, Cys239/Cys244, and Cys255/Cys331. An N-linked (GlcNAc...) asparagine glycan is attached at Asn76. The active-site Nucleophile is Glu213. Glu218 acts as the Proton donor in catalysis. Residues Asn271 and Asn385 are each glycosylated (N-linked (GlcNAc...) asparagine).

This sequence belongs to the glycosyl hydrolase 7 (cellulase C) family. In terms of assembly, monomer.

Its subcellular location is the secreted. The enzyme catalyses Endohydrolysis of (1-&gt;4)-beta-D-glucosidic linkages in cellulose, lichenin and cereal beta-D-glucans.. In terms of biological role, endoglucanase that is involved in the biological conversion of cellulose to glucose. Hydrolyzes internal beta-1,4-glucosidic bonds. This Pyricularia oryzae (strain 70-15 / ATCC MYA-4617 / FGSC 8958) (Rice blast fungus) protein is Endoglucanase 1.